A 491-amino-acid polypeptide reads, in one-letter code: Probable cytosol aminopeptidase (491 aa).

Residues lysine 263 and aspartate 268 each contribute to the Mn(2+) site. The active site involves lysine 275. 3 residues coordinate Mn(2+): aspartate 286, aspartate 345, and glutamate 347. The active site involves arginine 349.

It belongs to the peptidase M17 family. It depends on Mn(2+) as a cofactor.

It is found in the cytoplasm. The catalysed reaction is Release of an N-terminal amino acid, Xaa-|-Yaa-, in which Xaa is preferably Leu, but may be other amino acids including Pro although not Arg or Lys, and Yaa may be Pro. Amino acid amides and methyl esters are also readily hydrolyzed, but rates on arylamides are exceedingly low.. It carries out the reaction Release of an N-terminal amino acid, preferentially leucine, but not glutamic or aspartic acids.. Its function is as follows. Presumably involved in the processing and regular turnover of intracellular proteins. Catalyzes the removal of unsubstituted N-terminal amino acids from various peptides. This is Probable cytosol aminopeptidase from Haemophilus influenzae (strain PittEE).